The sequence spans 258 residues: UPF0246 protein YaaA (258 aa).

Belongs to the UPF0246 family.

The chain is UPF0246 protein YaaA from Escherichia coli O6:K15:H31 (strain 536 / UPEC).